A 295-amino-acid polypeptide reads, in one-letter code: ESX-3 secretion-associated protein EspG3 (295 aa).

Belongs to the EspG family. Interacts specifically with ESX-3-dependent PE/PPE proteins.

The protein resides in the cytoplasm. Specific chaperone for cognate PE/PPE proteins. Plays an important role in preventing aggregation of PE/PPE dimers. The polypeptide is ESX-3 secretion-associated protein EspG3 (Mycobacterium tuberculosis (strain CDC 1551 / Oshkosh)).